The primary structure comprises 745 residues: 5-methyltetrahydropteroyltriglutamate--homocysteine methyltransferase (745 aa).

Residues Lys-19 and Asn-115 each coordinate 5-methyltetrahydropteroyltri-L-glutamate. L-homocysteine is bound by residues 420-422 (IGS) and Glu-473. Residues 420–422 (IGS) and Glu-473 contribute to the L-methionine site. 5-methyltetrahydropteroyltri-L-glutamate is bound by residues Asp-478, Tyr-501, 504 to 505 (RA), and Trp-550. Asp-588 contacts L-homocysteine. Asp-588 lines the L-methionine pocket. Zn(2+)-binding residues include His-630, Cys-632, and Glu-654. Catalysis depends on His-683, which acts as the Proton donor. Cys-715 provides a ligand contact to Zn(2+).

The protein belongs to the vitamin-B12 independent methionine synthase family. Zn(2+) is required as a cofactor.

The catalysed reaction is 5-methyltetrahydropteroyltri-L-glutamate + L-homocysteine = tetrahydropteroyltri-L-glutamate + L-methionine. It participates in amino-acid biosynthesis; L-methionine biosynthesis via de novo pathway; L-methionine from L-homocysteine (MetE route): step 1/1. In terms of biological role, catalyzes the transfer of a methyl group from 5-methyltetrahydrofolate to homocysteine resulting in methionine formation. This is 5-methyltetrahydropteroyltriglutamate--homocysteine methyltransferase from Streptococcus mutans serotype c (strain ATCC 700610 / UA159).